Here is a 385-residue protein sequence, read N- to C-terminus: GTP cyclohydrolase-2 (385 aa).

The interval 1-189 (MYADAPSDSA…RDIADYRVHV (189 aa)) is DHBP synthase-like. A GTP cyclohydrolase II region spans residues 190-385 (VRTLRRVAEA…TKAERSGHMF (196 aa)). GTP is bound at residue 240–244 (RLHSE). Residues Cys-245, Cys-256, and Cys-258 each coordinate Zn(2+). Residues Gln-261, 283–285 (EGR), and Thr-305 each bind GTP. The Proton acceptor role is filled by Asp-317. Arg-319 acts as the Nucleophile in catalysis. The GTP site is built by Thr-340 and Lys-345.

In the N-terminal section; belongs to the DHBP synthase family. The protein in the C-terminal section; belongs to the GTP cyclohydrolase II family. The cofactor is Zn(2+).

It carries out the reaction GTP + 4 H2O = 2,5-diamino-6-hydroxy-4-(5-phosphoribosylamino)-pyrimidine + formate + 2 phosphate + 3 H(+). Its pathway is cofactor biosynthesis; riboflavin biosynthesis; 5-amino-6-(D-ribitylamino)uracil from GTP: step 1/4. Functionally, catalyzes the conversion of GTP to 2,5-diamino-6-ribosylamino-4(3H)-pyrimidinone 5'-phosphate (DARP), formate and pyrophosphate. This chain is GTP cyclohydrolase-2 (ribA), found in Azospirillum brasilense.